The chain runs to 149 residues: UPF0260 protein RCAP_rcc02083 (149 aa).

Belongs to the UPF0260 family.

In Rhodobacter capsulatus (strain ATCC BAA-309 / NBRC 16581 / SB1003), this protein is UPF0260 protein RCAP_rcc02083.